We begin with the raw amino-acid sequence, 259 residues long: Hydroxyacylglutathione hydrolase (259 aa).

The Zn(2+) site is built by histidine 56, histidine 58, aspartate 60, histidine 61, histidine 112, aspartate 133, and histidine 171.

It belongs to the metallo-beta-lactamase superfamily. Glyoxalase II family. Monomer. The cofactor is Zn(2+).

The catalysed reaction is an S-(2-hydroxyacyl)glutathione + H2O = a 2-hydroxy carboxylate + glutathione + H(+). It functions in the pathway secondary metabolite metabolism; methylglyoxal degradation; (R)-lactate from methylglyoxal: step 2/2. Thiolesterase that catalyzes the hydrolysis of S-D-lactoyl-glutathione to form glutathione and D-lactic acid. In Pseudomonas entomophila (strain L48), this protein is Hydroxyacylglutathione hydrolase.